The primary structure comprises 59 residues: Large ribosomal subunit protein bL32c (59 aa).

Residues 37–59 are disordered; it reads SRSFSSGNEHPKPKGFSGQQANK.

This sequence belongs to the bacterial ribosomal protein bL32 family.

The protein resides in the plastid. It localises to the chloroplast. This Saccharum hybrid (Sugarcane) protein is Large ribosomal subunit protein bL32c.